The primary structure comprises 218 residues: Large ribosomal subunit protein uL3 (218 aa).

Positions 134 to 154 (GRASHGNSRSHNVPGSIGMAQ) are disordered. Gln-154 carries the N5-methylglutamine modification.

It belongs to the universal ribosomal protein uL3 family. As to quaternary structure, part of the 50S ribosomal subunit. Forms a cluster with proteins L14 and L19. Post-translationally, methylated by PrmB.

In terms of biological role, one of the primary rRNA binding proteins, it binds directly near the 3'-end of the 23S rRNA, where it nucleates assembly of the 50S subunit. The chain is Large ribosomal subunit protein uL3 from Polynucleobacter necessarius subsp. necessarius (strain STIR1).